Reading from the N-terminus, the 96-residue chain is UPF0235 protein Acid345_4205 (96 aa).

Belongs to the UPF0235 family.

This Koribacter versatilis (strain Ellin345) protein is UPF0235 protein Acid345_4205.